We begin with the raw amino-acid sequence, 100 residues long: Large ribosomal subunit protein uL23 (100 aa).

The protein belongs to the universal ribosomal protein uL23 family. As to quaternary structure, part of the 50S ribosomal subunit. Contacts protein L29, and trigger factor when it is bound to the ribosome.

Its function is as follows. One of the early assembly proteins it binds 23S rRNA. One of the proteins that surrounds the polypeptide exit tunnel on the outside of the ribosome. Forms the main docking site for trigger factor binding to the ribosome. This Yersinia enterocolitica serotype O:8 / biotype 1B (strain NCTC 13174 / 8081) protein is Large ribosomal subunit protein uL23.